The following is a 239-amino-acid chain: Hexuronic acid methyltransferase AglP (239 aa).

The protein belongs to the FkbM methyltransferase family.

It localises to the cytoplasm. The protein operates within cell surface structure biogenesis; S-layer biogenesis. Involved in the assembly of a N-linked pentasaccharide that decorates the S-layer glycoprotein and flagellins. S-adenosyl-L-methionine-dependent methyltransferase that modifies the hexuronic acid found at position 4 of the pentasaccharide. This Haloferax volcanii (strain ATCC 29605 / DSM 3757 / JCM 8879 / NBRC 14742 / NCIMB 2012 / VKM B-1768 / DS2) (Halobacterium volcanii) protein is Hexuronic acid methyltransferase AglP (aglP).